The primary structure comprises 110 residues: Large ribosomal subunit protein uL22 (110 aa).

This sequence belongs to the universal ribosomal protein uL22 family. Part of the 50S ribosomal subunit.

Its function is as follows. This protein binds specifically to 23S rRNA; its binding is stimulated by other ribosomal proteins, e.g. L4, L17, and L20. It is important during the early stages of 50S assembly. It makes multiple contacts with different domains of the 23S rRNA in the assembled 50S subunit and ribosome. The globular domain of the protein is located near the polypeptide exit tunnel on the outside of the subunit, while an extended beta-hairpin is found that lines the wall of the exit tunnel in the center of the 70S ribosome. This Shewanella baltica (strain OS223) protein is Large ribosomal subunit protein uL22.